Reading from the N-terminus, the 408-residue chain is MDKLLERFLHYVSLDTQSKSGVRQVPSTEGQWKLLRLLKQQLEEMGLVNITLSEKGTLMATLPANVEGDIPAIGFISHVDTSPDFSGKNVTPQIVENYRGGDIALGIGDEVLSPVMFPVLHQLLGQTLITTDGKTLLGADDKAGVAEIMTALAVLKGNNIPHGEIKVAFTPDEEVGKGAKHFDVEAFGAQWAYTVDGGGVGELEFENFNAASVNIKIVGNNVHPGTAKGVMVNALSLAARIHAEVPVDEAPETTEGYEGFYHLASMKGTVDRADMHYIIRDFDRKQFEARKRKMMEIAKKVGKGLHPDCYIELVIEDSYYNMREKVVEHPHILDIAQQAMRDCDITPEMKPIRGGTDGAQLSFMGLPCPNLFTGGYNYHGKHEFVTLEGMEKAVQVIVRIAELTAKQQ.

Residue His-78 participates in Zn(2+) binding. The active site involves Asp-80. Residue Asp-140 participates in Zn(2+) binding. Residue Glu-173 is the Proton acceptor of the active site. Residues Glu-174, Asp-196, and His-379 each contribute to the Zn(2+) site.

The protein belongs to the peptidase M20B family. It depends on Zn(2+) as a cofactor.

Its subcellular location is the cytoplasm. The enzyme catalyses Release of the N-terminal residue from a tripeptide.. Cleaves the N-terminal amino acid of tripeptides. The chain is Peptidase T from Salmonella arizonae (strain ATCC BAA-731 / CDC346-86 / RSK2980).